The chain runs to 415 residues: Actin-like protein 7B (415 aa).

Positions 1–31 (MATRNSPMPLGTAQGDPGEAGTRPGPDASLR) are disordered. S6 is subject to Phosphoserine.

It belongs to the actin family. As to expression, detected only in the testis and, to a lesser extent, in the prostate.

It is found in the cytoplasm. It localises to the cytoskeleton. The protein is Actin-like protein 7B (ACTL7B) of Homo sapiens (Human).